The primary structure comprises 593 residues: Developmental and secondary metabolism regulator VEL1 (593 aa).

Residues 1–16 (MSNIVVSNETKSQSVR) are compositionally biased toward polar residues. Positions 1–21 (MSNIVVSNETKSQSVRTTKDG) are disordered. The 192-residue stretch at 21–212 (GRQIRYNLQV…AEQGCRVRIR (192 aa)) folds into the Velvet domain. Positions 35-40 (ERARAC) match the Nuclear localization signal motif. Residues 218–569 (RRRENKSSKE…PGSPDMEEPM (352 aa)) form a disordered region. Residues 310-326 (PSYGSNQPQYSQQYQTP) are compositionally biased toward low complexity. Over residues 327-340 (QPAPMMQPPQPPQH) the composition is skewed to pro residues. Low complexity-rich tracts occupy residues 341–360 (STPY…HQAQ) and 367–389 (QQYG…QPQY). Polar residues-rich tracts occupy residues 413–429 (SSIT…SSHP) and 440–449 (GRSQQMSQPL). The interval 443–487 (QQMSQPLHSSPQSYASSAPSHQSLPSLRPIVADKLEPVSPSYQSP) is PEST. The span at 450–465 (HSSPQSYASSAPSHQS) shows a compositional bias: low complexity. 2 stretches are compositionally biased toward polar residues: residues 482–505 (PSYQ…SNQH) and 512–534 (NPQT…SSTF).

This sequence belongs to the velvet family. VeA subfamily. In terms of assembly, component of the heterotrimeric velvet complex composed of LAE1, VEL1 and VEL2; VEL1 acting as a bridging protein between LAE1 and VEL2.

Its subcellular location is the nucleus. The protein localises to the cytoplasm. In terms of biological role, component of the velvet transcription factor complex that controls sexual/asexual developmental ratio in response to light, promoting sexual development in the darkness while stimulating asexual sporulation under illumination. The velvet complex acts as a global regulator for secondary metabolite gene expression. Controls the expression of the T-toxin gene cluster. Promotes oxidative stress tolerance and acts as a virulence factors during infection. Negatively regulate mycelial pigmentation and controls sexual development, as well as asexual development during vegetative growth. This chain is Developmental and secondary metabolism regulator VEL1, found in Cochliobolus heterostrophus (strain C5 / ATCC 48332 / race O) (Southern corn leaf blight fungus).